A 307-amino-acid chain; its full sequence is L-carnitine dehydrogenase (307 aa).

8–13 (GTGVIG) lines the NAD(+) pocket.

It belongs to the 3-hydroxyacyl-CoA dehydrogenase family. L-carnitine dehydrogenase subfamily. In terms of assembly, homodimer.

The protein resides in the cytoplasm. The catalysed reaction is carnitine + NAD(+) = 3-dehydrocarnitine + NADH + H(+). Its pathway is amine and polyamine metabolism; carnitine metabolism. Its function is as follows. Catalyzes the NAD(+)-dependent oxidation of L-carnitine to 3-dehydrocarnitine. The chain is L-carnitine dehydrogenase from Oceanobacillus iheyensis (strain DSM 14371 / CIP 107618 / JCM 11309 / KCTC 3954 / HTE831).